Consider the following 385-residue polypeptide: Succinate--CoA ligase [ADP-forming] subunit beta (385 aa).

An ATP-grasp domain is found at 9 to 244; that stretch reads KEILRKYGVP…QDEEDPLETR (236 aa). ATP is bound by residues Lys-46, 53-55, Glu-99, Cys-102, and Glu-107; that span reads GRG. Mg(2+) contacts are provided by Asn-199 and Asp-213. Substrate contacts are provided by residues Asn-264 and 321–323; that span reads GIM.

It belongs to the succinate/malate CoA ligase beta subunit family. As to quaternary structure, heterotetramer of two alpha and two beta subunits. Requires Mg(2+) as cofactor.

It carries out the reaction succinate + ATP + CoA = succinyl-CoA + ADP + phosphate. The enzyme catalyses GTP + succinate + CoA = succinyl-CoA + GDP + phosphate. Its pathway is carbohydrate metabolism; tricarboxylic acid cycle; succinate from succinyl-CoA (ligase route): step 1/1. Functionally, succinyl-CoA synthetase functions in the citric acid cycle (TCA), coupling the hydrolysis of succinyl-CoA to the synthesis of either ATP or GTP and thus represents the only step of substrate-level phosphorylation in the TCA. The beta subunit provides nucleotide specificity of the enzyme and binds the substrate succinate, while the binding sites for coenzyme A and phosphate are found in the alpha subunit. In Rickettsia bellii (strain OSU 85-389), this protein is Succinate--CoA ligase [ADP-forming] subunit beta.